Here is a 201-residue protein sequence, read N- to C-terminus: uncharacterized protein (201 aa).

This is an uncharacterized protein from Caenorhabditis elegans.